The chain runs to 332 residues: Cytochrome c oxidase subunit 2 (332 aa).

The N-terminal stretch at 1–20 (MKIPGSVITLLIGVVITVVS) is a signal peptide. 2 helical membrane-spanning segments follow: residues 48–68 (MMTI…YCLI) and 87–107 (VPLE…LAVY). Positions 214, 249, 253, and 257 each coordinate Cu cation.

Belongs to the cytochrome c oxidase subunit 2 family. Requires Cu cation as cofactor.

It localises to the cell membrane. It carries out the reaction 4 Fe(II)-[cytochrome c] + O2 + 8 H(+)(in) = 4 Fe(III)-[cytochrome c] + 2 H2O + 4 H(+)(out). Subunits I and II form the functional core of the enzyme complex. Electrons originating in cytochrome c are transferred via heme a and Cu(A) to the binuclear center formed by heme a3 and Cu(B). This is Cytochrome c oxidase subunit 2 (ctaC) from Synechocystis sp. (strain ATCC 27184 / PCC 6803 / Kazusa).